Consider the following 366-residue polypeptide: Glucan organizing enzyme 1 (366 aa).

The Extracellular segment spans residues 1–24 (MLPLWARGGKPIVIPLPQKRHITL). The chain crosses the membrane as a helical span at residues 25 to 45 (PALPILLLLLGTGFLLHSLFF). Topologically, residues 46 to 366 (PPPPPHPPGK…ETYKKWKRGH (321 aa)) are cytoplasmic.

Belongs to the glycosyltransferase 32 family.

The protein resides in the cell membrane. In terms of biological role, plays a role in the localization of glycogen rosettes to the plasma membrane. Required for correct cell wall organization and may facilitate the connection between beta-1,3-glucan and beta-1,6-glucan in the cell wall. This is Glucan organizing enzyme 1 from Cryptococcus neoformans var. grubii serotype A (strain H99 / ATCC 208821 / CBS 10515 / FGSC 9487) (Filobasidiella neoformans var. grubii).